The sequence spans 120 residues: Reprimo-like protein (120 aa).

Residues 67 to 87 (VAQIAVLCVLSLTVVFGVFFL) form a helical membrane-spanning segment. Position 109 is a phosphoserine (S109).

The protein belongs to the reprimo family.

The protein resides in the membrane. The polypeptide is Reprimo-like protein (RPRML) (Homo sapiens (Human)).